We begin with the raw amino-acid sequence, 576 residues long: Homeobox protein invected (576 aa).

Disordered regions lie at residues 1–68, 80–102, 305–344, 364–410, and 426–476; these read MSTL…DEQT, EVEE…NSVL, GGSV…LAQS, NSND…GEDS, and SDRP…RPRT. Residues 80–91 are compositionally biased toward acidic residues; it reads EVEEEHDLDLED. 3 stretches are compositionally biased toward low complexity: residues 309 to 325, 364 to 381, and 395 to 405; these read SGSS…TNGN, NSND…TNTS, and AGAGATGASGK. The segment covering 450-468 has biased composition (gly residues); that stretch reads AGGGGGGVEKGEAADGGGV. Positions 471 to 530 form a DNA-binding region, homeobox; it reads DKRPRTAFSGTQLARLKHEFNENRYLTEKRRQQLSGELGLNEAQIKIWFQNKRAKLKKSS.

This sequence belongs to the engrailed homeobox family. Expressed in row 6/7 of the embryonic neuroectoderm.

The protein resides in the nucleus. Engrailed (en) and invected (inv) are functionally redundant transcription factors in neuronal precursor cell NB5-3 specification. Inv is unable to substitute for en in other regulatory processes such as maintaining gsb expression in the neuroectoderm after stage 10 of embryogenesis. Maintenance of gsb expression in row 5 of the neuroectoderm involves an as yet unidentified short range signaling molecule. This chain is Homeobox protein invected (inv), found in Drosophila melanogaster (Fruit fly).